Consider the following 23-residue polypeptide: Unknown protein NF005 from 2D-PAGE (23 aa).

The segment at 1–23 (AGKARKQLSKNEDTKLKEQYIXD) is disordered. The span at 9-23 (SKNEDTKLKEQYIXD) shows a compositional bias: basic and acidic residues.

This chain is Unknown protein NF005 from 2D-PAGE, found in Naegleria fowleri (Brain eating amoeba).